The chain runs to 542 residues: CTP synthase (542 aa).

Residues 1-265 are amidoligase domain; sequence MTRYIFVTGG…DQLVIERFGL (265 aa). CTP is bound at residue Ser13. Ser13 is a UTP binding site. ATP-binding positions include 14 to 19 and Asp71; that span reads SLGKGI. Mg(2+)-binding residues include Asp71 and Glu139. Residues 146-148, 186-191, and Lys222 contribute to the CTP site; these read DIE and KTKPTQ. UTP is bound by residues 186–191 and Lys222; that span reads KTKPTQ. Positions 290–541 constitute a Glutamine amidotransferase type-1 domain; that stretch reads TIAMVGKYME…VEAALANKKG (252 aa). Gly351 is an L-glutamine binding site. Cys378 serves as the catalytic Nucleophile; for glutamine hydrolysis. L-glutamine is bound by residues 379 to 382, Glu402, and Arg469; that span reads LGMQ. Catalysis depends on residues His514 and Glu516.

The protein belongs to the CTP synthase family. As to quaternary structure, homotetramer.

The enzyme catalyses UTP + L-glutamine + ATP + H2O = CTP + L-glutamate + ADP + phosphate + 2 H(+). It catalyses the reaction L-glutamine + H2O = L-glutamate + NH4(+). The catalysed reaction is UTP + NH4(+) + ATP = CTP + ADP + phosphate + 2 H(+). It functions in the pathway pyrimidine metabolism; CTP biosynthesis via de novo pathway; CTP from UDP: step 2/2. Allosterically activated by GTP, when glutamine is the substrate; GTP has no effect on the reaction when ammonia is the substrate. The allosteric effector GTP functions by stabilizing the protein conformation that binds the tetrahedral intermediate(s) formed during glutamine hydrolysis. Inhibited by the product CTP, via allosteric rather than competitive inhibition. Its function is as follows. Catalyzes the ATP-dependent amination of UTP to CTP with either L-glutamine or ammonia as the source of nitrogen. Regulates intracellular CTP levels through interactions with the four ribonucleotide triphosphates. This chain is CTP synthase, found in Marinobacter nauticus (strain ATCC 700491 / DSM 11845 / VT8) (Marinobacter aquaeolei).